The following is a 282-amino-acid chain: UDP-3-O-acyl-N-acetylglucosamine deacetylase (282 aa).

Residues His74, His226, and Asp230 each contribute to the Zn(2+) site. The Proton donor role is filled by His253.

It belongs to the LpxC family. Zn(2+) serves as cofactor.

It catalyses the reaction a UDP-3-O-[(3R)-3-hydroxyacyl]-N-acetyl-alpha-D-glucosamine + H2O = a UDP-3-O-[(3R)-3-hydroxyacyl]-alpha-D-glucosamine + acetate. The protein operates within glycolipid biosynthesis; lipid IV(A) biosynthesis; lipid IV(A) from (3R)-3-hydroxytetradecanoyl-[acyl-carrier-protein] and UDP-N-acetyl-alpha-D-glucosamine: step 2/6. Catalyzes the hydrolysis of UDP-3-O-myristoyl-N-acetylglucosamine to form UDP-3-O-myristoylglucosamine and acetate, the committed step in lipid A biosynthesis. This is UDP-3-O-acyl-N-acetylglucosamine deacetylase from Aquifex aeolicus (strain VF5).